The chain runs to 55 residues: Large ribosomal subunit protein bL33A (55 aa).

Belongs to the bacterial ribosomal protein bL33 family.

This is Large ribosomal subunit protein bL33A from Mycobacterium sp. (strain JLS).